A 432-amino-acid chain; its full sequence is Calcium uptake protein 2, mitochondrial (432 aa).

The N-terminal 22 residues, 1–22 (MAAAAGRSAWLAAWGGRLRRGL), are a transit peptide targeting the mitochondrion. The region spanning 169–204 (KPHSGFHVAFKMLDVDGNEMIERKEFVKLQKIISKQ) is the EF-hand 1 domain. Ca(2+) is bound by residues D182, D184, N186, M188, E190, and E193. Residue S202 is modified to Phosphoserine. The EF-hand 2; degenerate domain occupies 224–259 (EPGVNTTLQVRFFGKRGEKKLHYKEFRRFMENLQTE). Residues 290–325 (TENKDIYWRNVREKLSVGESISLDEFKSFCHFTTHL) enclose the EF-hand 3; degenerate domain. In terms of domain architecture, EF-hand 4 spans 359–394 (LSDNLLDTVFKIFDLDGDECLSHGEFLGVLKNRMHR). Ca(2+)-binding residues include D372, D374, D376, C378, and E383.

It belongs to the MICU1 family. MICU2 subfamily. Heterodimer; disulfide-linked; heterodimerizes with MICU1. Component of the uniplex complex, composed of MCU, EMRE/SMDT1, MICU1 and MICU2 in a 4:4:1:1 stoichiometry. Predominantly expressed in stomach, intestine, skeletal muscle, kidney, heart, testis, prostate and uterus.

Its subcellular location is the mitochondrion intermembrane space. It localises to the mitochondrion inner membrane. Its function is as follows. Calcium sensor of the mitochondrial calcium uniporter (MCU) channel, which senses calcium level via its EF-hand domains. MICU1 and MICU2 form a disulfide-linked heterodimer that stimulates and inhibits MCU activity, depending on the concentration of calcium. At low calcium levels, MICU1 occludes the pore of the MCU channel, preventing mitochondrial calcium uptake. At higher calcium levels, calcium-binding to MICU1 and MICU2 induces a conformational change that weakens MCU-MICU1 interactions and moves the MICU1-MICU2 heterodimer away from the pore, allowing calcium permeation through the MCU channel. The sequence is that of Calcium uptake protein 2, mitochondrial from Mus musculus (Mouse).